We begin with the raw amino-acid sequence, 289 residues long: Glycine-rich RNA-binding protein 5, mitochondrial (289 aa).

Residues 1 to 31 (MAFLSKVGRLFSQTSSHVTASSSMLQSIRCM) constitute a mitochondrion transit peptide. Positions 34–111 (SKIFVGGISY…RRIRVNYATE (78 aa)) constitute an RRM domain. The tract at residues 219-289 (QGSSTNAGFD…TDDGDVAKRA (71 aa)) is disordered. Polar residues predominate over residues 257–272 (GSDNQFGDAENGNTEN).

Belongs to the GR-RBP family. As to quaternary structure, homodimer. Interacts with MORF8/RIP1 AND RBG3/ORRM3. Binds to RBG2/ORRM5.

The protein localises to the mitochondrion. Possibly has a role in RNA transcription or processing during stress. Binds RNAs and DNAs sequence with a preference to single-stranded nucleic acids. Displays strong affinity to poly(U) sequence. Involved in C-to-U editing of mitochondrial RNA. Functions as a major mitochondrial editing factor. Controls 44 percent of the mitochondrial editing sites. The chain is Glycine-rich RNA-binding protein 5, mitochondrial from Arabidopsis thaliana (Mouse-ear cress).